The following is a 607-amino-acid chain: TOM1-like protein 8 (607 aa).

In terms of domain architecture, VHS spans 9–138; it reads ATSDMLIGPD…ELLRAGIVFP (130 aa). The interval 141-175 is disordered; sequence PQITPSSGQNGPSTRYPQNSRNARQEAIDTSTESE. The GAT domain maps to 175–263; the sequence is EFPTLSLTEI…LLAKHEAIAS (89 aa). At S297 the chain carries Phosphoserine. Positions 355 to 379 are enriched in polar residues; that stretch reads NNCESSTPTSNPHANHQKVQQNYSN. 3 disordered regions span residues 355–393, 407–460, and 555–582; these read NNCE…YYGQ, QPSS…SPTH, and DNGN…NKKP. S410 carries the phosphoserine modification. Over residues 448–460 the composition is skewed to low complexity; sequence QSPSSSPQYSPTH. Over residues 555-569 the composition is skewed to polar residues; the sequence is DNGNNNTNPYQVSSH.

The protein belongs to the TOM1 family. In terms of tissue distribution, specifically expressed in siliques and flowers.

The protein resides in the membrane. Functionally, might contribute to the loading of the ESCRT machinery. The sequence is that of TOM1-like protein 8 from Arabidopsis thaliana (Mouse-ear cress).